Consider the following 885-residue polypeptide: DNA mismatch repair protein MutS (885 aa).

626-633 (GPNMGGKS) lines the ATP pocket.

It belongs to the DNA mismatch repair MutS family.

Its function is as follows. This protein is involved in the repair of mismatches in DNA. It is possible that it carries out the mismatch recognition step. This protein has a weak ATPase activity. The polypeptide is DNA mismatch repair protein MutS (Burkholderia ambifaria (strain MC40-6)).